A 168-amino-acid chain; its full sequence is Ribulose bisphosphate carboxylase small subunit, chloroplastic (168 aa).

A chloroplast-targeting transit peptide spans 1–28; that stretch reads MASIAAKSVSLRAATRRAAPVAAPADAR.

This sequence belongs to the RuBisCO small chain family. As to quaternary structure, heterohexadecamer of 8 large and 8 small subunits.

It is found in the plastid. Its subcellular location is the chloroplast. Functionally, ruBisCO catalyzes two reactions: the carboxylation of D-ribulose 1,5-bisphosphate, the primary event in carbon dioxide fixation, as well as the oxidative fragmentation of the pentose substrate. Both reactions occur simultaneously and in competition at the same active site. Although the small subunit is not catalytic it is essential for maximal activity. The chain is Ribulose bisphosphate carboxylase small subunit, chloroplastic from Chlamydomonas moewusii (Chlamydomonas eugametos).